We begin with the raw amino-acid sequence, 98 residues long: uncharacterized protein (98 aa).

Belongs to the HesB/IscA family.

This is an uncharacterized protein from Staphylococcus aureus (strain USA300).